The sequence spans 337 residues: Tetraacyldisaccharide 4'-kinase (337 aa).

An ATP-binding site is contributed by 51 to 58 (HLGGAGKT).

The protein belongs to the LpxK family.

It carries out the reaction a lipid A disaccharide + ATP = a lipid IVA + ADP + H(+). Its pathway is glycolipid biosynthesis; lipid IV(A) biosynthesis; lipid IV(A) from (3R)-3-hydroxytetradecanoyl-[acyl-carrier-protein] and UDP-N-acetyl-alpha-D-glucosamine: step 6/6. Transfers the gamma-phosphate of ATP to the 4'-position of a tetraacyldisaccharide 1-phosphate intermediate (termed DS-1-P) to form tetraacyldisaccharide 1,4'-bis-phosphate (lipid IVA). The polypeptide is Tetraacyldisaccharide 4'-kinase (Nitrobacter winogradskyi (strain ATCC 25391 / DSM 10237 / CIP 104748 / NCIMB 11846 / Nb-255)).